Consider the following 359-residue polypeptide: Cytohesin-interacting protein (359 aa).

Residues 77–166 (VVTVEKQDNG…LLTIETLNGT (90 aa)) enclose the PDZ domain. The stretch at 165–188 (GTMIHRRAELEAKLQTLKQTLKKK) forms a coiled coil. Residues 166–188 (TMIHRRAELEAKLQTLKQTLKKK) are interaction with CYTH1.

In terms of assembly, interacts with CYTH1 and SNX27.

Its subcellular location is the cytoplasm. It localises to the early endosome. Functionally, by its binding to cytohesin-1 (CYTH1), it modifies activation of ARFs by CYTH1 and its precise function may be to sequester CYTH1 in the cytoplasm. The polypeptide is Cytohesin-interacting protein (Cytip) (Mus musculus (Mouse)).